We begin with the raw amino-acid sequence, 1147 residues long: Sterol regulatory element-binding protein 1 (1147 aa).

The transcriptional activation (acidic) stretch occupies residues 1–60 (MDEPPFSEAALEQALGEPCDLDAALLTDIEDMLQLINNQDSDFPGLFDPPYAGSGAGGTD). Topologically, residues 1 to 487 (MDEPPFSEAA…HSRGMLDRSR (487 aa)) are cytoplasmic. The short motif at 27 to 35 (TDIEDMLQL) is the 9aaTAD element. The interval 39 to 193 (QDSDFPGLFD…PLPGLPLASP (155 aa)) is disordered. 2 stretches are compositionally biased toward low complexity: residues 62–71 (ASPDTSSPGS) and 78–95 (TLSS…AAPS). A compositionally biased stretch (pro residues) spans 96-105 (PLSPPQPAPT). Phosphoserine occurs at positions 98 and 117. Low complexity predominate over residues 170 to 190 (GGFSTGSPPGNTQQPLPGLPL). The interaction with LMNA stretch occupies residues 234 to 497 (QQVPVLLQPH…LALCTLVFLC (264 aa)). The 51-residue stretch at 323-373 (EKRTAHNAIEKRYRSSINDKIIELKDLVVGTEAKLNKSAVLRKAIDYIRFL) folds into the bHLH domain. Residues Ser-337 and Ser-338 each carry the phosphoserine; by SIK1 modification. Residues 373–394 (LQHSNQKLKQENLSLRTAVHKS) form a leucine-zipper region. The residue at position 396 (Ser-396) is a Phosphoserine; by AMPK. A Phosphoserine; by SIK1 modification is found at Ser-402. The segment at 421-479 (VEDTLTPPPSDAGSPFQSSPLSLGSRGSGSGGSGSDSEPDSPVFEDSKAKPEQRPSLHS) is disordered. Phosphoserine is present on Ser-457. Residues 465–479 (EDSKAKPEQRPSLHS) show a composition bias toward basic and acidic residues. A helical membrane pass occupies residues 488–508 (LALCTLVFLCLSCNPLASLLG). Residues 509–547 (ARGLPSPSDTTSVYHSPGRNVLGTESRDGPGWAQWLLPP) are Lumenal-facing. The helical transmembrane segment at 548 to 568 (VVWLLNGLLVLVSLVLLFVYG) threads the bilayer. The Cytoplasmic segment spans residues 569-1147 (EPVTRPHSGP…LGGGTTVTSS (579 aa)). Position 1060 is a phosphoserine (Ser-1060).

The protein belongs to the SREBP family. Forms a tight complex with SCAP, the SCAP-SREBP complex, in the endoplasmic reticulum membrane and the Golgi apparatus. Interacts with PAQR3; the interaction anchors the SCAP-SREBP complex to the Golgi apparatus in low cholesterol conditions. In terms of assembly, efficient DNA binding of the soluble transcription factor fragment requires dimerization with another bHLH protein. Interacts with CEBPA, the interaction produces a transcriptional synergy. Interacts with LMNA. In terms of processing, processed in the Golgi apparatus, releasing the protein from the membrane. At low cholesterol the SCAP-SREBP complex is recruited into COPII vesicles for export from the endoplasmic reticulum. In the Golgi, complex SREBPs are cleaved sequentially by site-1 (MBTPS1, S1P) and site-2 (MBTPS2, S2P) protease. The first cleavage by site-1 protease occurs within the luminal loop, the second cleavage by site-2 protease occurs within the first transmembrane domain, releasing the transcription factor from the Golgi membrane. Phosphorylated by AMPK, leading to suppress protein processing and nuclear translocation, and repress target gene expression. Phosphorylation at Ser-402 by SIK1 represses activity possibly by inhibiting DNA-binding. Post-translationally, SCAP-free SREBF1 is ubiquitinated by the BCR(ARMC5) complex, leading to its degradation. In terms of processing, ubiquitinated; the nuclear form has a rapid turnover and is rapidly ubiquitinated and degraded by the proteasome in the nucleus. Expressed in a wide variety of tissues, most abundant in liver and adrenal gland. In fetal tissues lung and liver shows highest expression. In terms of tissue distribution, predominates in hepatoma cell lines. Also expressed in kidney, brain, white fat, and muscle. As to expression, predominantly expressed in liver and adipose tissues. Also expressed in kidney, brain, white fat, and muscle.

It is found in the endoplasmic reticulum membrane. Its subcellular location is the golgi apparatus membrane. The protein localises to the cytoplasmic vesicle. It localises to the COPII-coated vesicle membrane. The protein resides in the nucleus. Its activity is regulated as follows. Activation by cleavage is down-regulated upon activation of SIRT3-dependent PRKAA1/AMPK-alpha signaling cascade which leads to inhibition of ATP-consuming lipogenesis to restore cellular energy balance. In terms of biological role, precursor of the transcription factor form (Processed sterol regulatory element-binding protein 1), which is embedded in the endoplasmic reticulum membrane. Low sterol concentrations promote processing of this form, releasing the transcription factor form that translocates into the nucleus and activates transcription of genes involved in cholesterol biosynthesis and lipid homeostasis. Its function is as follows. Key transcription factor that regulates expression of genes involved in cholesterol biosynthesis and lipid homeostasis. Binds to the sterol regulatory element 1 (SRE-1) (5'-ATCACCCCAC-3'). Has dual sequence specificity binding to both an E-box motif (5'-ATCACGTGA-3') and to SRE-1 (5'-ATCACCCCAC-3'). Regulates the promoters of genes involved in cholesterol biosynthesis and the LDL receptor (LDLR) pathway of sterol regulation. Isoform expressed only in select tissues, which has higher transcriptional activity compared to SREBP-1C. Able to stimulate both lipogenic and cholesterogenic gene expression. Has a role in the nutritional regulation of fatty acids and triglycerides in lipogenic organs such as the liver. Required for innate immune response in macrophages by regulating lipid metabolism. Functionally, predominant isoform expressed in most tissues, which has weaker transcriptional activity compared to isoform SREBP-1A. Primarily controls expression of lipogenic gene. Strongly activates global lipid synthesis in rapidly growing cells. In terms of biological role, the absence of Golgi proteolytic processing requirement makes this isoform constitutively active in transactivation of lipogenic gene promoters. The chain is Sterol regulatory element-binding protein 1 from Homo sapiens (Human).